A 119-amino-acid chain; its full sequence is Flagellar transcriptional regulator FlhD (119 aa).

This sequence belongs to the FlhD family. Homodimer; disulfide-linked. Forms a heterohexamer composed of two FlhC and four FlhD subunits. Each FlhC binds a FlhD dimer, forming a heterotrimer, and a hexamer assembles by dimerization of two heterotrimers.

The protein resides in the cytoplasm. Functions in complex with FlhC as a master transcriptional regulator that regulates transcription of several flagellar and non-flagellar operons by binding to their promoter region. Activates expression of class 2 flagellar genes, including fliA, which is a flagellum-specific sigma factor that turns on the class 3 genes. Also regulates genes whose products function in a variety of physiological pathways. In Enterobacter sp. (strain 638), this protein is Flagellar transcriptional regulator FlhD.